The chain runs to 414 residues: MDNRTARFLKTRFQKYYKNAEIGLPDHLPNREWAFIFFDSMPDKMMHRHKAFGSPGEALDYLYGMAPAHVYNSTAYYEYPDARKMNEKNWLGAELIFDLDADHLPDAPKNYADMLELVKKETFKLMDFLLEDFGFSEQEIELVFSGGRGYHFHVRSPKVLKLGSAERREIVNYLSGRDLDFKYFFREVAMDGEFGTGSKTFKGMKNVPFKCTLVGYDSGWGRRIALYLTDYMKAECGKRYKKDMFPELRRYEKVGDTTIKKLISLTNSENGLKDILEKGRLDFDVRNFKDIAAYFMRESVEDFLHRFGTSVDEPVTADIKRLIRVPGSLHGGSGMLVKKLALSELEKFDPLTDAVVFGERPVKVTVLKPFSVQLKGKDLRVEEGIQEVPEYAAVYLICRGVAEYGHRRNQPGPV.

Active-site residues include D98, D100, and D312.

It belongs to the eukaryotic-type primase small subunit family. Heterodimer of a small subunit (PriS) and a large subunit (PriL). The cofactor is Mg(2+). Requires Mn(2+) as cofactor.

Catalytic subunit of DNA primase, an RNA polymerase that catalyzes the synthesis of short RNA molecules used as primers for DNA polymerase during DNA replication. The small subunit contains the primase catalytic core and has DNA synthesis activity on its own. Binding to the large subunit stabilizes and modulates the activity, increasing the rate of DNA synthesis while decreasing the length of the DNA fragments, and conferring RNA synthesis capability. The DNA polymerase activity may enable DNA primase to also catalyze primer extension after primer synthesis. May also play a role in DNA repair. The sequence is that of DNA primase small subunit PriS from Methanosarcina barkeri (strain Fusaro / DSM 804).